A 65-amino-acid polypeptide reads, in one-letter code: Protein translocase subunit SecE (65 aa).

Residues 1–34 (MEKLRKFFREVIAEAKKISWPSRKELLTSFGVVL) are Cytoplasmic-facing. A helical membrane pass occupies residues 35-51 (VILAVTSVYFFVLDFIF). Topologically, residues 52–65 (SGVVSAIFKALGIG) are extracellular.

Belongs to the SecE/SEC61-gamma family. In terms of assembly, component of the Sec protein translocase complex. Heterotrimer consisting of SecY, SecE and SecG subunits. The heterotrimers can form oligomers, although 1 heterotrimer is thought to be able to translocate proteins. Interacts with SecDF, and other proteins may be involved. The channel interacts with SecA via subunit SecY.

It localises to the cell inner membrane. Essential subunit of the protein translocation channel SecYEG. Clamps together the 2 halves of SecY. May contact the channel plug during translocation. The protein is Protein translocase subunit SecE of Thermotoga maritima (strain ATCC 43589 / DSM 3109 / JCM 10099 / NBRC 100826 / MSB8).